Consider the following 464-residue polypeptide: MAYYSTVLKRKVRKMLAVHFIAIGGIGMSGLARILQSKGYRVSGSDLKETELTKKLRAEGITVFIGHREENLASDVSLVVVSTAVSQDNPELLKAKRLGIPVMHRGELLARLMQEKKGIAVAGTHGKTTTSSMIAYVLEKEGFDPVIAVGGEIVDLGYNAKAGQGEYMVAEADESDGSFLKLLPYAAVITNIEADHLDYYQSFEEIKKAFKKFADNIRPEGFGVFCWDNLQVREMLKGYKKRKFTYGFSPGSDFMLRDYREEQNQLVANIYYKNTLEGELRLKVPGKHNILNAAAATAVLRNIGLSFKAISERLLEFNGAKRRFQILGERNGALIVDDYAHHPTEVEATLRAAKLYKDRDVLVVFQPHRYTRTHFFYKEFARVLVDAEKVVLTGIYSAGEKPIPGVSGEMIAEEMKKLGKNPLYLESLDEVYNYLEQNLKPGLLVLLLGAGNINQVGYKLLGKA.

Residue 123 to 129 (GTHGKTT) coordinates ATP.

Belongs to the MurCDEF family.

It localises to the cytoplasm. The enzyme catalyses UDP-N-acetyl-alpha-D-muramate + L-alanine + ATP = UDP-N-acetyl-alpha-D-muramoyl-L-alanine + ADP + phosphate + H(+). The protein operates within cell wall biogenesis; peptidoglycan biosynthesis. Functionally, cell wall formation. This Carboxydothermus hydrogenoformans (strain ATCC BAA-161 / DSM 6008 / Z-2901) protein is UDP-N-acetylmuramate--L-alanine ligase.